Reading from the N-terminus, the 471-residue chain is Trigger factor (471 aa).

Residues 169–264 enclose the PPIase FKBP-type domain; the sequence is GDVAVVDFKG…LKEIKEKELP (96 aa). A disordered region spans residues 443 to 471; it reads SLASQESEITAPETEAETIEVTAESTTGE. Residues 448 to 471 show a composition bias toward low complexity; that stretch reads ESEITAPETEAETIEVTAESTTGE.

The protein belongs to the FKBP-type PPIase family. Tig subfamily.

It localises to the cytoplasm. It carries out the reaction [protein]-peptidylproline (omega=180) = [protein]-peptidylproline (omega=0). Its function is as follows. Involved in protein export. Acts as a chaperone by maintaining the newly synthesized protein in an open conformation. Functions as a peptidyl-prolyl cis-trans isomerase. The protein is Trigger factor of Trichormus variabilis (strain ATCC 29413 / PCC 7937) (Anabaena variabilis).